The following is a 191-amino-acid chain: Iron-sulfur flavoprotein (191 aa).

4 residues coordinate [4Fe-4S] cluster: Cys-47, Cys-50, Cys-53, and Cys-59.

This sequence belongs to the SsuE family. Isf subfamily. As to quaternary structure, homodimer. FMN serves as cofactor. It depends on [4Fe-4S] cluster as a cofactor.

Functionally, redox-active protein probably involved in electron transport during fermentation of acetate to methane. This chain is Iron-sulfur flavoprotein (isf), found in Methanosarcina thermophila.